A 337-amino-acid chain; its full sequence is Glucan endo-1,3-beta-glucosidase, basic isoform 1 (337 aa).

The Proton donor role is filled by glutamate 94. Glutamate 239 functions as the Nucleophile in the catalytic mechanism. The propeptide at 315–337 (VSERVWDISAETNSTASSLISEM) is removed in mature form. N-linked (GlcNAc...) asparagine glycosylation occurs at asparagine 327.

Belongs to the glycosyl hydrolase 17 family.

The protein localises to the vacuole. It carries out the reaction Hydrolysis of (1-&gt;3)-beta-D-glucosidic linkages in (1-&gt;3)-beta-D-glucans.. Functionally, is thought to be an important plant defense-related product against fungal pathogens. The sequence is that of Glucan endo-1,3-beta-glucosidase, basic isoform 1 (GLUB1) from Solanum tuberosum (Potato).